The chain runs to 579 residues: MFLQLRAEVEDALADALTTLDLPAEDLGIEEPPEDVDAVLASSVAFRLAGEVGTAPPNVASDIADAIAADDLTYVSDVTTQGPYVNFLPSEAYFAETLQSVTESGFGRLPDRDTSVVVEHTSANPTGPVHVGRARNPIIGDAVARVLDYAGYDVDRHYYVNDAGRQIAVFTWAYETFDEDDLPEPERESPEYEMVRYYRKGNTILEDGDPDEVEAAEAEVQSILQGLEDGDEETYERVAEVVDTVLGGMQNTLGRLPAEFDEFVKETKFMRNGDTDDLVDRLKGLDCAVYEEDAWQLDLPDFEKNLVFLRSDGTSLYTTRDLAHHEWKFDTYDRAVTVLGEDHKLQADQLAAALELLDNDTDQLRQVFYSWVNLPEGGMSTREGTGIDLDDLLDEAIDRAREEVESRLDDRTRGDLDEDDIDRIARQVGIGAVRYDIVSKQPTKGITFEWDRALDFEAQSAPYVQYVHARCCGILGDVETDIPDEPDLDPLSEPEERDLLRELARFPAVIEAAADDLTPHTVATYTRDLAETFNAFYRECPVLDADPETRAARLALVDGTRTTIANALDALGVEAPTSM.

Residues Ala-123–Arg-133 carry the 'HIGH' region motif.

Belongs to the class-I aminoacyl-tRNA synthetase family.

The protein resides in the cytoplasm. The catalysed reaction is tRNA(Arg) + L-arginine + ATP = L-arginyl-tRNA(Arg) + AMP + diphosphate. This is Arginine--tRNA ligase from Haloarcula marismortui (strain ATCC 43049 / DSM 3752 / JCM 8966 / VKM B-1809) (Halobacterium marismortui).